The chain runs to 280 residues: Vitamin B12-binding protein (280 aa).

An N-terminal signal peptide occupies residues M1–A27. One can recognise a Fe/B12 periplasmic-binding domain in the interval R30–A277. Y57 contacts cyanocob(III)alamin. C190 and C266 are joined by a disulfide.

It belongs to the BtuF family. The complex is composed of two ATP-binding proteins (BtuD), two transmembrane proteins (BtuC) and a solute-binding protein (BtuF).

The protein resides in the periplasm. In terms of biological role, part of the ABC transporter complex BtuCDF involved in vitamin B12 import. Binds vitamin B12 and delivers it to the periplasmic surface of BtuC. This Yersinia pseudotuberculosis serotype O:1b (strain IP 31758) protein is Vitamin B12-binding protein.